A 59-amino-acid chain; its full sequence is Sec-independent protein translocase protein TatA (59 aa).

Residues Met1 to Phe21 form a helical membrane-spanning segment.

Belongs to the TatA/E family. In terms of assembly, forms a complex with TatC.

It localises to the cell membrane. Its function is as follows. Part of the twin-arginine translocation (Tat) system that transports large folded proteins containing a characteristic twin-arginine motif in their signal peptide across membranes. TatA could form the protein-conducting channel of the Tat system. In Bacillus mycoides (strain KBAB4) (Bacillus weihenstephanensis), this protein is Sec-independent protein translocase protein TatA.